Consider the following 1942-residue polypeptide: Myosin-1 (1942 aa).

Positions 33–82 (DAKSSVFVVDAKESFVKATVQSREGGKVTAKTEGGTTVTVKDDQVYPMNP) constitute a Myosin N-terminal SH3-like domain. A Phosphoserine modification is found at S36. Phosphothreonine occurs at positions 64 and 69. Residues 86–785 (DKIEDMAMMT…LLGLLEEMRD (700 aa)) enclose the Myosin motor domain. The residue at position 130 (K130) is an N6,N6,N6-trimethyllysine. Position 179–186 (179–186 (GESGAGKT)) interacts with ATP. Y389 is subject to Phosphotyrosine. T419 is subject to Phosphothreonine. Y424 is subject to Phosphotyrosine. S625 carries the post-translational modification Phosphoserine. The segment at 662 to 684 (LNKLMTNLRSTHPHFVRCIIPNE) is actin-binding. Residue H760 is modified to Pros-methylhistidine. The tract at residues 764 to 778 (KFGHTKVFFKAGLLG) is actin-binding. Residues 788-817 (LAQLITRTQAMCRGYLARVEYQKMVERRES) enclose the IQ domain. Residues 846–1942 (LLKSAETEKE…EVHTKIISEE (1097 aa)) adopt a coiled-coil conformation. Phosphoserine is present on residues S1095, S1099, S1165, S1240, and S1246. The disordered stretch occupies residues 1156 to 1175 (RLEEAGGATSAQIEMNKKRE). Position 1258 is a phosphothreonine (T1258). Position 1264 is a phosphoserine (S1264). A phosphothreonine mark is found at T1268 and T1289. A phosphoserine mark is found at S1291, S1295, S1306, and S1309. Y1467 bears the Phosphotyrosine mark. T1470 carries the post-translational modification Phosphothreonine. S1477 bears the Phosphoserine mark. Y1495 bears the Phosphotyrosine mark. At S1498 the chain carries Phosphoserine. T1504 bears the Phosphothreonine mark. Position 1517 is a phosphoserine (S1517). At T1520 the chain carries Phosphothreonine. Residues S1545, S1557, S1577, S1603, S1606, S1717, and S1729 each carry the phosphoserine modification. Residues T1733 and T1739 each carry the phosphothreonine modification. At S1742 the chain carries Phosphoserine.

Belongs to the TRAFAC class myosin-kinesin ATPase superfamily. Myosin family. In terms of assembly, muscle myosin is a hexameric protein that consists of 2 heavy chain subunits (MHC), 2 alkali light chain subunits (MLC) and 2 regulatory light chain subunits (MLC-2). Interacts with SLC26A5. In terms of tissue distribution, expressed in the cochlea (at protein level). Strongly expressed in spiral ganglion neurons with axonal sprouts and supporting cells around hair cells. In the organ of Corti, it is expressed in inner and outer hair cells, and in supporting cells.

The protein localises to the cytoplasm. Its subcellular location is the myofibril. Required for normal hearing. It plays a role in cochlear amplification of auditory stimuli, likely through the positive regulation of prestin (SLC26A5) activity and outer hair cell (OHC) electromotility. The protein is Myosin-1 of Mus musculus (Mouse).